Reading from the N-terminus, the 300-residue chain is MAEPTVCSFLTKVLCAHGGRMFLKDLRGHVELSEARLRDVLQRAGPERFLLQEVETQEGLGDAEAEAAAGAVGGGGTSAWRVVAVSSVRLCARYQRGECQACDQLHFCRRHMLGKCPNRDCWSTCTLSHDIHTPVNMQVLKSHGLFGLNENQLRILLLQNDPCLLPEVCLLYNKGEALYGYCNLKDKCNKFHVCKSFVKGECKLQTCKRSHQLIHAASLKLLQDQGLNIPSVVNFQIISTYKHMKLHKMLENTDNSSPSTEHSQGLEKQGVHAAGAAEAGPLASVPAQSAKKPCPVSCEK.

An N-acetylalanine modification is found at A2. Residues 252 to 263 are compositionally biased toward polar residues; that stretch reads NTDNSSPSTEHS. The disordered stretch occupies residues 252–300; sequence NTDNSSPSTEHSQGLEKQGVHAAGAAEAGPLASVPAQSAKKPCPVSCEK. Over residues 271 to 283 the composition is skewed to low complexity; sequence VHAAGAAEAGPLA.

The chain is Zinc finger CCCH-type antiviral protein 1-like (ZC3HAV1L) from Homo sapiens (Human).